The primary structure comprises 188 residues: MLKLRQLQKKKQKENENSSSIQPNLSAARIRLKRDLDSLDLPPTVTLNVITSPDSADRSQSPKLEVIVRPDEGYYNYGSINFNLDFNEVYPIEPPKVVCLKKIFHPNIDLKGNVCLNILREDWSPALDLQSIITGLLFLFLEPNPNDPLNKDAAKLLCEGEKEFAEAVRLTMSGGSIEHVKYDNIVSP.

N-acetylmethionine is present on M1. Basic residues predominate over residues 1–12; sequence MLKLRQLQKKKQ. The tract at residues 1–23 is disordered; it reads MLKLRQLQKKKQKENENSSSIQP. The 151-residue stretch at 27 to 177 folds into the UBC core domain; it reads AARIRLKRDL…VRLTMSGGSI (151 aa). The Glycyl thioester intermediate role is filled by C115.

It belongs to the ubiquitin-conjugating enzyme family. UBC12 subfamily. As to quaternary structure, interacts with DCN1. The acetylation of Met-1 is cotranslational, and not regulatory. The N-acetylmethionine increases affinity for DCUN1D1 by about 2 orders of magnitude and is crucial for NEDD8 transfer to cullins.

It catalyses the reaction [E1 NEDD8-activating enzyme]-S-[NEDD8 protein]-yl-L-cysteine + [E2 NEDD8-conjugating enzyme]-L-cysteine = [E1 NEDD8-activating enzyme]-L-cysteine + [E2 NEDD8-conjugating enzyme]-S-[NEDD8-protein]-yl-L-cysteine.. Its pathway is protein modification; protein neddylation. Its function is as follows. Accepts the ubiquitin-like protein NEDD8/RUB1 from the UBA3-ULA1 E1 complex and catalyzes its covalent attachment to other proteins. The major substrate is CDC53/Cullin. In Saccharomyces cerevisiae (strain ATCC 204508 / S288c) (Baker's yeast), this protein is NEDD8-conjugating enzyme UBC12 (UBC12).